Reading from the N-terminus, the 464-residue chain is Na(+)/H(+) antiporter NhaA 2 (464 aa).

11 consecutive transmembrane segments (helical) span residues valine 53 to tryptophan 73, leucine 96 to leucine 116, alanine 134 to valine 154, glycine 165 to serine 185, phenylalanine 195 to tyrosine 215, isoleucine 219 to glutamine 239, valine 257 to valine 277, isoleucine 313 to leucine 333, proline 340 to threonine 360, tryptophan 378 to isoleucine 398, and phenylalanine 412 to leucine 432.

Belongs to the NhaA Na(+)/H(+) (TC 2.A.33) antiporter family.

It localises to the cell membrane. It carries out the reaction Na(+)(in) + 2 H(+)(out) = Na(+)(out) + 2 H(+)(in). Its function is as follows. Na(+)/H(+) antiporter that extrudes sodium in exchange for external protons. This chain is Na(+)/H(+) antiporter NhaA 2, found in Mycolicibacterium vanbaalenii (strain DSM 7251 / JCM 13017 / BCRC 16820 / KCTC 9966 / NRRL B-24157 / PYR-1) (Mycobacterium vanbaalenii).